Reading from the N-terminus, the 310-residue chain is Methionyl-tRNA formyltransferase (310 aa).

(6S)-5,6,7,8-tetrahydrofolate is bound at residue 111 to 114 (SILP).

This sequence belongs to the Fmt family.

It catalyses the reaction L-methionyl-tRNA(fMet) + (6R)-10-formyltetrahydrofolate = N-formyl-L-methionyl-tRNA(fMet) + (6S)-5,6,7,8-tetrahydrofolate + H(+). Attaches a formyl group to the free amino group of methionyl-tRNA(fMet). The formyl group appears to play a dual role in the initiator identity of N-formylmethionyl-tRNA by promoting its recognition by IF2 and preventing the misappropriation of this tRNA by the elongation apparatus. The protein is Methionyl-tRNA formyltransferase of Methylobacterium nodulans (strain LMG 21967 / CNCM I-2342 / ORS 2060).